A 56-amino-acid polypeptide reads, in one-letter code: Cytochrome b-c1 complex subunit 10 (56 aa).

Residues 1–12 (MVTRFLGPRYRE) are Mitochondrial matrix-facing. The helical transmembrane segment at 13–35 (LVKNWVPTAYTWGAVGAVGLVWA) threads the bilayer. Residues 36 to 56 (TDWRLILDWVPYINGKFKKDN) lie on the Mitochondrial intermembrane side of the membrane.

The protein belongs to the UQCR11/QCR10 family. In terms of assembly, component of the ubiquinol-cytochrome c oxidoreductase (cytochrome b-c1 complex, complex III, CIII), a multisubunit enzyme composed of 11 subunits. The complex is composed of 3 respiratory subunits cytochrome b, cytochrome c1 and Rieske protein UQCRFS1, 2 core protein subunits UQCRC1/QCR1 and UQCRC2/QCR2, and 6 low-molecular weight protein subunits UQCRH/QCR6, UQCRB/QCR7, UQCRQ/QCR8, UQCR10/QCR9, UQCR11/QCR10 and subunit 9, the cleavage product of Rieske protein UQCRFS1. The complex exists as an obligatory dimer and forms supercomplexes (SCs) in the inner mitochondrial membrane with NADH-ubiquinone oxidoreductase (complex I, CI) and cytochrome c oxidase (complex IV, CIV), resulting in different assemblies (supercomplex SCI(1)III(2)IV(1) and megacomplex MCI(2)III(2)IV(2)).

The protein localises to the mitochondrion inner membrane. Its function is as follows. Component of the ubiquinol-cytochrome c oxidoreductase, a multisubunit transmembrane complex that is part of the mitochondrial electron transport chain which drives oxidative phosphorylation. The respiratory chain contains 3 multisubunit complexes succinate dehydrogenase (complex II, CII), ubiquinol-cytochrome c oxidoreductase (cytochrome b-c1 complex, complex III, CIII) and cytochrome c oxidase (complex IV, CIV), that cooperate to transfer electrons derived from NADH and succinate to molecular oxygen, creating an electrochemical gradient over the inner membrane that drives transmembrane transport and the ATP synthase. The cytochrome b-c1 complex catalyzes electron transfer from ubiquinol to cytochrome c, linking this redox reaction to translocation of protons across the mitochondrial inner membrane, with protons being carried across the membrane as hydrogens on the quinol. In the process called Q cycle, 2 protons are consumed from the matrix, 4 protons are released into the intermembrane space and 2 electrons are passed to cytochrome c. QCR10 has a role in CIII assembly and RIP1 stability. The sequence is that of Cytochrome b-c1 complex subunit 10 (UQCR11) from Homo sapiens (Human).